We begin with the raw amino-acid sequence, 229 residues long: GTP cyclohydrolase 1 (229 aa).

The tract at residues 1 to 21 (MDAKIKPLRAGKSADARTDFQ) is disordered. Zn(2+) contacts are provided by Cys118, His121, and Cys189.

It belongs to the GTP cyclohydrolase I family. As to quaternary structure, toroid-shaped homodecamer, composed of two pentamers of five dimers.

The enzyme catalyses GTP + H2O = 7,8-dihydroneopterin 3'-triphosphate + formate + H(+). The protein operates within cofactor biosynthesis; 7,8-dihydroneopterin triphosphate biosynthesis; 7,8-dihydroneopterin triphosphate from GTP: step 1/1. The polypeptide is GTP cyclohydrolase 1 (Rhodopseudomonas palustris (strain HaA2)).